We begin with the raw amino-acid sequence, 450 residues long: Adenylosuccinate lyase (450 aa).

N(6)-(1,2-dicarboxyethyl)-AMP-binding positions include 9–10, 75–77, and 101–102; these read RY, HHD, and TS. The Proton donor/acceptor role is filled by histidine 149. Glutamine 223 is a binding site for N(6)-(1,2-dicarboxyethyl)-AMP. Catalysis depends on serine 273, which acts as the Proton donor/acceptor. N(6)-(1,2-dicarboxyethyl)-AMP-binding positions include serine 274, 279–281, and 318–322; these read KRN and SVERV.

This sequence belongs to the lyase 1 family. Adenylosuccinate lyase subfamily. Homotetramer. Residues from neighboring subunits contribute catalytic and substrate-binding residues to each active site.

It catalyses the reaction N(6)-(1,2-dicarboxyethyl)-AMP = fumarate + AMP. The enzyme catalyses (2S)-2-[5-amino-1-(5-phospho-beta-D-ribosyl)imidazole-4-carboxamido]succinate = 5-amino-1-(5-phospho-beta-D-ribosyl)imidazole-4-carboxamide + fumarate. It participates in purine metabolism; AMP biosynthesis via de novo pathway; AMP from IMP: step 2/2. Its pathway is purine metabolism; IMP biosynthesis via de novo pathway; 5-amino-1-(5-phospho-D-ribosyl)imidazole-4-carboxamide from 5-amino-1-(5-phospho-D-ribosyl)imidazole-4-carboxylate: step 2/2. Catalyzes two reactions in de novo purine nucleotide biosynthesis. Catalyzes the breakdown of 5-aminoimidazole- (N-succinylocarboxamide) ribotide (SAICAR or 2-[5-amino-1-(5-phospho-beta-D-ribosyl)imidazole-4-carboxamido]succinate) to 5-aminoimidazole-4-carboxamide ribotide (AICAR or 5-amino-1-(5-phospho-beta-D-ribosyl)imidazole-4-carboxamide) and fumarate, and of adenylosuccinate (ADS or N(6)-(1,2-dicarboxyethyl)-AMP) to adenosine monophosphate (AMP) and fumarate. The sequence is that of Adenylosuccinate lyase (purB) from Pyrococcus horikoshii (strain ATCC 700860 / DSM 12428 / JCM 9974 / NBRC 100139 / OT-3).